Consider the following 270-residue polypeptide: 3-methyl-2-oxobutanoate hydroxymethyltransferase (270 aa).

The Mg(2+) site is built by aspartate 50 and aspartate 89. 3-methyl-2-oxobutanoate contacts are provided by residues 50-51, aspartate 89, and lysine 118; that span reads DS. Glutamate 120 is a Mg(2+) binding site. The active-site Proton acceptor is glutamate 187.

This sequence belongs to the PanB family. As to quaternary structure, homodecamer; pentamer of dimers. Requires Mg(2+) as cofactor.

It is found in the cytoplasm. It catalyses the reaction 3-methyl-2-oxobutanoate + (6R)-5,10-methylene-5,6,7,8-tetrahydrofolate + H2O = 2-dehydropantoate + (6S)-5,6,7,8-tetrahydrofolate. It participates in cofactor biosynthesis; (R)-pantothenate biosynthesis; (R)-pantoate from 3-methyl-2-oxobutanoate: step 1/2. In terms of biological role, catalyzes the reversible reaction in which hydroxymethyl group from 5,10-methylenetetrahydrofolate is transferred onto alpha-ketoisovalerate to form ketopantoate. This is 3-methyl-2-oxobutanoate hydroxymethyltransferase from Helicobacter pylori (strain Shi470).